Reading from the N-terminus, the 501-residue chain is Glycogen synthase 1 (501 aa).

Lysine 18 contacts ADP-alpha-D-glucose.

This sequence belongs to the glycosyltransferase 1 family. Bacterial/plant glycogen synthase subfamily.

The catalysed reaction is [(1-&gt;4)-alpha-D-glucosyl](n) + ADP-alpha-D-glucose = [(1-&gt;4)-alpha-D-glucosyl](n+1) + ADP + H(+). The protein operates within glycan biosynthesis; glycogen biosynthesis. In terms of biological role, synthesizes alpha-1,4-glucan chains using ADP-glucose. This Geobacter sulfurreducens (strain ATCC 51573 / DSM 12127 / PCA) protein is Glycogen synthase 1.